Here is a 133-residue protein sequence, read N- to C-terminus: Nucleoside diphosphate kinase (133 aa).

ATP contacts are provided by Lys-9, Phe-57, Arg-85, Thr-91, Arg-102, and Asn-112. Residue His-115 is the Pros-phosphohistidine intermediate of the active site.

This sequence belongs to the NDK family. Mg(2+) serves as cofactor.

It is found in the cytoplasm. The enzyme catalyses a 2'-deoxyribonucleoside 5'-diphosphate + ATP = a 2'-deoxyribonucleoside 5'-triphosphate + ADP. It catalyses the reaction a ribonucleoside 5'-diphosphate + ATP = a ribonucleoside 5'-triphosphate + ADP. Major role in the synthesis of nucleoside triphosphates other than ATP. The ATP gamma phosphate is transferred to the NDP beta phosphate via a ping-pong mechanism, using a phosphorylated active-site intermediate. In Methanococcus maripaludis (strain DSM 14266 / JCM 13030 / NBRC 101832 / S2 / LL), this protein is Nucleoside diphosphate kinase.